Here is an 889-residue protein sequence, read N- to C-terminus: Extended synaptotagmin-3 (889 aa).

The disordered stretch occupies residues 1 to 65 (MAQGDPGGQT…GPRDPGQGGA (65 aa)). Over 1 to 66 (MAQGDPGGQT…PRDPGQGGAG (66 aa)) the chain is Cytoplasmic. Basic and acidic residues-rich tracts occupy residues 17 to 28 (TDKKPDEPKATE) and 41 to 58 (PGGEKGLRDPPGGEKGPR). 2 consecutive transmembrane segments (helical) span residues 67 to 91 (EALAEALYGLGRPVLRAVLYLFPVY) and 92 to 112 (LCGRFGLSPTWLLFGLFLWMF). The Cytoplasmic segment spans residues 113–889 (WTRNKKFKLA…ELTPTGLPTS (777 aa)). Residues 155–333 (DVERVEWLNK…LPNRFTVPLS (179 aa)) enclose the SMP-LTD domain. C2 domains are found at residues 331 to 452 (PLSS…DEWF) and 468 to 618 (WLSL…STIK). Ca(2+) contacts are provided by K363, D364, D376, D423, E424, D425, D427, D429, and D430. The disordered stretch occupies residues 649 to 724 (SIKRAQSQQH…GAVPESHTPS (76 aa)). The span at 658-671 (HKSHGKSHQAHHQA) shows a compositional bias: basic residues. Composition is skewed to low complexity over residues 672–682 (HQTQQNHTVQQ) and 691–714 (ISTTSQQANTSSSNPAPNQNPNST). In terms of domain architecture, C2 3 spans 757 to 879 (MTGEVEVSVR…DLVKGFTKWF (123 aa)). The interval 804–811 (RKWSGRKK) is required for phosphatidylinositol 4,5-bisphosphate-dependent location at the cell membrane.

Belongs to the extended synaptotagmin family.

Its subcellular location is the cell membrane. It localises to the endoplasmic reticulum membrane. Tethers the endoplasmic reticulum to the cell membrane and promotes the formation of appositions between the endoplasmic reticulum and the cell membrane. Binds glycerophospholipids in a barrel-like domain and may play a role in cellular lipid transport. The chain is Extended synaptotagmin-3 (esyt3) from Xenopus tropicalis (Western clawed frog).